The primary structure comprises 109 residues: Biphenyl dioxygenase ferredoxin subunit (109 aa).

Positions 4-100 constitute a Rieske domain; the sequence is TKACSVDEVP…IRIEGRDVLV (97 aa). Residues Cys43, His45, Cys63, and His66 each coordinate [2Fe-2S] cluster.

It belongs to the bacterial ring-hydroxylating dioxygenase ferredoxin component family. As to quaternary structure, this dioxygenase system consists of four proteins: the two subunits of the hydroxylase component (BphA1 and BphA2), a ferredoxin (BphA3) and a ferredoxin reductase (BphA4).

This protein seems to be a 2Fe-2S ferredoxin. The protein is Biphenyl dioxygenase ferredoxin subunit (bphA3) of Pseudomonas sp. (strain KKS102).